A 367-amino-acid chain; its full sequence is Alginate lyase (367 aa).

The N-terminal stretch at 1–24 (MTIINRKTAPALLALALFGGAAQA) is a signal peptide. Substrate contacts are provided by residues 63 to 64 (SK), 136 to 137 (HT), and Y254.

The protein belongs to the polysaccharide lyase 5 family.

Its subcellular location is the periplasm. The catalysed reaction is Eliminative cleavage of alginate to give oligosaccharides with 4-deoxy-alpha-L-erythro-hex-4-enuronosyl groups at their non-reducing ends and beta-D-mannuronate at their reducing end.. Catalyzes the depolymerization of alginate by cleaving the beta-1,4 glycosidic bond between two adjacent sugar residues via a beta-elimination mechanism. May serve to degrade mislocalized alginate that is trapped in the periplasmic space. The polypeptide is Alginate lyase (Pseudomonas entomophila (strain L48)).